We begin with the raw amino-acid sequence, 216 residues long: Minor capsid protein P6 (216 aa).

A hydrophobic region spans residues 1–21 (MILVGIAVLILLAVFAILYYK).

As to quaternary structure, interacts with the major capsid protein.

It is found in the virion. Its function is as follows. One of the minor capsid proteins that constitute a network internal to the major capsid proteins and outside the lipid membrane. The minor capsid proteins glue and stabilize the capsomers. The protein is Minor capsid protein P6 of Paramecium bursaria Chlorella virus 1 (PBCV-1).